Here is a 456-residue protein sequence, read N- to C-terminus: Exodeoxyribonuclease 7 large subunit (456 aa).

Belongs to the XseA family. In terms of assembly, heterooligomer composed of large and small subunits.

Its subcellular location is the cytoplasm. It catalyses the reaction Exonucleolytic cleavage in either 5'- to 3'- or 3'- to 5'-direction to yield nucleoside 5'-phosphates.. In terms of biological role, bidirectionally degrades single-stranded DNA into large acid-insoluble oligonucleotides, which are then degraded further into small acid-soluble oligonucleotides. In Escherichia coli (strain SE11), this protein is Exodeoxyribonuclease 7 large subunit.